Reading from the N-terminus, the 409-residue chain is Elongation factor Tu, chloroplastic (409 aa).

Residues 10–214 enclose the tr-type G domain; sequence KPHVNIGTIG…AVDEYIPTPE (205 aa). A G1 region spans residues 19-26; that stretch reads GHVDHGKT. 19-26 contacts GTP; that stretch reads GHVDHGKT. Residue threonine 26 coordinates Mg(2+). Residues 60–64 form a G2 region; that stretch reads GITIN. Residues 81–84 form a G3 region; that stretch reads DCPG. GTP contacts are provided by residues 81-85 and 136-139; these read DCPGH and NKED. The tract at residues 136–139 is G4; it reads NKED. The interval 174–176 is G5; sequence SAL.

It belongs to the TRAFAC class translation factor GTPase superfamily. Classic translation factor GTPase family. EF-Tu/EF-1A subfamily.

The protein localises to the plastid. The protein resides in the chloroplast. The catalysed reaction is GTP + H2O = GDP + phosphate + H(+). Its function is as follows. GTP hydrolase that promotes the GTP-dependent binding of aminoacyl-tRNA to the A-site of ribosomes during protein biosynthesis. The chain is Elongation factor Tu, chloroplastic (tufA) from Trieres chinensis (Marine centric diatom).